The chain runs to 473 residues: ATP synthase subunit beta (473 aa).

Position 158–165 (glycine 158–threonine 165) interacts with ATP.

It belongs to the ATPase alpha/beta chains family. In terms of assembly, F-type ATPases have 2 components, CF(1) - the catalytic core - and CF(0) - the membrane proton channel. CF(1) has five subunits: alpha(3), beta(3), gamma(1), delta(1), epsilon(1). CF(0) has three main subunits: a(1), b(2) and c(9-12). The alpha and beta chains form an alternating ring which encloses part of the gamma chain. CF(1) is attached to CF(0) by a central stalk formed by the gamma and epsilon chains, while a peripheral stalk is formed by the delta and b chains.

It is found in the cell membrane. It catalyses the reaction ATP + H2O + 4 H(+)(in) = ADP + phosphate + 5 H(+)(out). Functionally, produces ATP from ADP in the presence of a proton gradient across the membrane. The catalytic sites are hosted primarily by the beta subunits. This chain is ATP synthase subunit beta, found in Geobacillus sp. (strain WCH70).